The following is a 95-amino-acid chain: Small ribosomal subunit protein mS37 (95 aa).

The region spanning 27–69 is the CHCH domain; that stretch reads ANKCLVLMSNLLQCWSSYGHMSPKCAGLVTELKSCTSESALGK. 2 short sequence motifs (cx9C motif) span residues 30-40 and 51-61; these read CLVLMSNLLQC and CAGLVTELKSC. Cystine bridges form between Cys-30–Cys-61 and Cys-40–Cys-51.

It belongs to the mitochondrion-specific ribosomal protein mS37 family. As to quaternary structure, component of the mitochondrial small ribosomal subunit (mt-SSU). Mature yeast 74S mitochondrial ribosomes consist of a small (37S) and a large (54S) subunit. The 37S small subunit contains a 15S ribosomal RNA (15S mt-rRNA) and 34 different proteins. The 54S large subunit contains a 21S rRNA (21S mt-rRNA) and 46 different proteins.

It localises to the mitochondrion. It is found in the mitochondrion matrix. Functionally, component of the mitochondrial ribosome (mitoribosome), a dedicated translation machinery responsible for the synthesis of mitochondrial genome-encoded proteins, including at least some of the essential transmembrane subunits of the mitochondrial respiratory chain. The mitoribosomes are attached to the mitochondrial inner membrane and translation products are cotranslationally integrated into the membrane. In Saccharomyces cerevisiae (strain ATCC 204508 / S288c) (Baker's yeast), this protein is Small ribosomal subunit protein mS37 (MRP10).